A 496-amino-acid chain; its full sequence is Germacrene A hydroxylase (496 aa).

Residues 1-2 (ME) lie on the Cytoplasmic side of the membrane. A helical; Signal-anchor for type II membrane protein membrane pass occupies residues 3–23 (LTLTTSLGLAVFVFILFKLLT). The Lumenal portion of the chain corresponds to 24 to 496 (GSKSTKNSLP…TAYKTANNSA (473 aa)). Position 432 (Cys-432) interacts with heme. The N-linked (GlcNAc...) asparagine glycan is linked to Asn-493.

It belongs to the cytochrome P450 family. Requires heme as cofactor.

The protein resides in the endoplasmic reticulum membrane. It catalyses the reaction (+)-(R)-germacrene A + 3 reduced [NADPH--hemoprotein reductase] + 3 O2 = germacra-1(10),4,11(13)-trien-12-oate + 3 oxidized [NADPH--hemoprotein reductase] + 4 H2O + 4 H(+). Its pathway is secondary metabolite biosynthesis; terpenoid biosynthesis. Functionally, involved in the biosynthesis of germacrene-derived sesquiterpene lactones. Catalyzes three consecutive oxidations of germacrene A to produce germacrene A acid. Could also catalyze the three-step oxidation of non-natural substrate amorphadiene to artemisinic acid. In Barnadesia spinosa (Spiny barnadesia), this protein is Germacrene A hydroxylase.